A 128-amino-acid polypeptide reads, in one-letter code: Fluoride-specific ion channel FluC (128 aa).

4 consecutive transmembrane segments (helical) span residues 5–25 (IVAI…LALA), 35–55 (LGTL…AVVF), 67–87 (LFVI…SVEV), and 96–116 (FGWA…LTAL). Na(+)-binding residues include glycine 75 and threonine 78.

Belongs to the fluoride channel Fluc/FEX (TC 1.A.43) family.

It is found in the cell inner membrane. The enzyme catalyses fluoride(in) = fluoride(out). Na(+) is not transported, but it plays an essential structural role and its presence is essential for fluoride channel function. Its function is as follows. Fluoride-specific ion channel. Important for reducing fluoride concentration in the cell, thus reducing its toxicity. The chain is Fluoride-specific ion channel FluC from Burkholderia ambifaria (strain MC40-6).